The primary structure comprises 448 residues: Phosphoglucosamine mutase (448 aa).

Catalysis depends on Ser100, which acts as the Phosphoserine intermediate. Mg(2+) is bound by residues Ser100, Asp240, Asp242, and Asp244. Ser100 bears the Phosphoserine mark.

Belongs to the phosphohexose mutase family. Mg(2+) serves as cofactor. In terms of processing, activated by phosphorylation.

The enzyme catalyses alpha-D-glucosamine 1-phosphate = D-glucosamine 6-phosphate. Its function is as follows. Catalyzes the conversion of glucosamine-6-phosphate to glucosamine-1-phosphate. This chain is Phosphoglucosamine mutase, found in Clostridioides difficile (strain 630) (Peptoclostridium difficile).